The sequence spans 768 residues: MTTYLEFIQQNEERDGVRFSWNVWPSSRLEATRMVVPVAALFTPLKERPDLPPIQYEPVLCSRTTCRAVLNPLCQVDYRAKLWACNFCYQRNQFPPTYAGISELNQPAELLPQFSSIEYVVLRGPQMPLIFLYVVDTCMEDEDLQALKESMQMSLSLLPPTALVGLITFGRMVQVHELGCEGISKSYVFRGTKDLSAKQLQEMLGLSKVPVTQATRGPQVQQPPPSNRFLQPVQKIDMNLTDLLGELQRDPWPVPQGKRPLRSSGVALSIAVGLLECTFPNTGARIMMFIGGPATQGPGMVVGDELKTPIRSWHDIEKDNAKYVKKGTKHFEALANRAATTGHVIDIYACALDQTGLLEMKCCPNLTGGYMVMGDSFNTSLFKQTFQRVFTKDMHGQFKMGFGGTLEIKTSREIKISGAIGPCVSLNSKGPCVSENEIGTGGTCQWKICGLSPTTTLAIYFEVVNQHNAPIPQGGRGAIQFVTQYQHSSGQRRIRVTTIARNWADAQTQIQNIAASFDQEAAAILMARLAIYRAETEEGPDVLRWLDRQLIRLCQKFGEYHKDDPSSFRFSETFSLYPQFMFHLRRSPFLQVFNNSPDESSYYRHHFMRQDLTQSLIMIQPILYAYSFSGPPEPVLLDSSSILADRILLMDTFFQILIYHGETIAQWRKSGYQDMPEYENFRHLLQAPVDDAQEILHSRFPMPRYIDTEHGGSQARFLLSKVNPSQTHNNMYAWGQESGAPILTDDVSLQVFMDHLKKTCCVKCCLMC.

Thr2 is subject to N-acetylthreonine. Residues Cys61, Cys66, Cys85, and Cys88 each contribute to the Zn(2+) site. Phosphothreonine is present on Thr308. One copy of the Gelsolin-like repeat lies at 632–718; it reads PEPVLLDSSS…EHGGSQARFL (87 aa).

This sequence belongs to the SEC23/SEC24 family. SEC23 subfamily. COPII is composed of at least five proteins: the Sec23/24 complex, the Sec13/31 complex and Sar1. Interacts with SEC23IP. Interacts with HTR4. Interacts with SEC16A. Interacts with SLC6A4. Interacts (as part of the Sec23/24 complex) with SEC22B; recruits SEC22B into COPII-coated vesicles and allows the transport of this cargo from the endoplasmic reticulum to the Golgi. Interacts (via Gelsolin-like repeat) with MIA2 and MIA3; specifically involved in the transport of large cargos like the collagen COL7A1. Interacts with DDHD1. Interacts with TMEM39A. Interacts with SACM1L; this interaction is reduced in the absence of TMEM39A. Interacts with kinase FAM20C; transport of FAM20C from the endoplasmic reticulum to the Golgi is likely to be mediated by COPII vesicles.

The protein resides in the cytoplasmic vesicle. The protein localises to the COPII-coated vesicle membrane. Its subcellular location is the endoplasmic reticulum membrane. It localises to the cytoplasm. It is found in the cytosol. Component of the coat protein complex II (COPII) which promotes the formation of transport vesicles from the endoplasmic reticulum (ER). The coat has two main functions, the physical deformation of the endoplasmic reticulum membrane into vesicles and the selection of cargo molecules for their transport to the Golgi complex. Required for the translocation of insulin-induced glucose transporter SLC2A4/GLUT4 to the cell membrane. This is Protein transport protein Sec23A from Bos taurus (Bovine).